Here is a 312-residue protein sequence, read N- to C-terminus: MNELKIVFMGSPEFALTPLKMLLAEGYDICGVYTQPDRPAGRGRELCPPPVKTLALEHGLAVYQPQSLKKPEEQAFLKELKPDVIVVAAYGLILPQAVLDIPVYGVLNIHPSLLPRYRGATPVAATLLGGDEWAGVSLMKLEAGLDTGPVYSRSMVAIRPEDTTPILADKLAFIGGCMLLELLSQIPSLPEPKVQDNTQASYFGMVTKEMGLINWQTSAVEIERRVRAFFPWPGVFTTFNQKTLKILEAKPRNLGLGLKPSEVRVYEQSRVMVGSASGELEIIRLQLEGKAGCSAADFVRGQRNFDGVNLGV.

A (6S)-5,6,7,8-tetrahydrofolate-binding site is contributed by 112 to 115 (SLLP).

The protein belongs to the Fmt family.

It catalyses the reaction L-methionyl-tRNA(fMet) + (6R)-10-formyltetrahydrofolate = N-formyl-L-methionyl-tRNA(fMet) + (6S)-5,6,7,8-tetrahydrofolate + H(+). Functionally, attaches a formyl group to the free amino group of methionyl-tRNA(fMet). The formyl group appears to play a dual role in the initiator identity of N-formylmethionyl-tRNA by promoting its recognition by IF2 and preventing the misappropriation of this tRNA by the elongation apparatus. In Dehalococcoides mccartyi (strain CBDB1), this protein is Methionyl-tRNA formyltransferase.